We begin with the raw amino-acid sequence, 307 residues long: MVEPMNWISEVVRPRIKTLFKRETPENLWVKCPDTGQMVFHKEVEQNHWVIPGSEHHLKMSATARLKMMFDEGTWIDVPLPEVPADPLKFRDEKRYVDRLKEARAKTGMPDAFKIGFGRVGSLPMTIAAQEFGFMAGSLGMAGGEAFVRGAETALEKRTPYVLFAASGGARMQEGILSLMQMPRTTVAVRRLRAARLPYIVVLTNPTTGGVTASYAMLGDVHLAEPGALICFAGPRVIEQTIREKLPDGFQRAEYLREHGMVDQVVHRHQLKETISRLCGLLMDVRRTPEPGTAPEPTTPEPLPNAA.

Residues 28-297 enclose the CoA carboxyltransferase N-terminal domain; sequence LWVKCPDTGQ…TPEPGTAPEP (270 aa). The interval 286-307 is disordered; the sequence is RRTPEPGTAPEPTTPEPLPNAA. Residues 292 to 307 are compositionally biased toward pro residues; that stretch reads GTAPEPTTPEPLPNAA.

This sequence belongs to the AccD/PCCB family. Acetyl-CoA carboxylase is a heterohexamer composed of biotin carboxyl carrier protein (AccB), biotin carboxylase (AccC) and two subunits each of ACCase subunit alpha (AccA) and ACCase subunit beta (AccD).

The protein resides in the cytoplasm. It carries out the reaction N(6)-carboxybiotinyl-L-lysyl-[protein] + acetyl-CoA = N(6)-biotinyl-L-lysyl-[protein] + malonyl-CoA. Its pathway is lipid metabolism; malonyl-CoA biosynthesis; malonyl-CoA from acetyl-CoA: step 1/1. Functionally, component of the acetyl coenzyme A carboxylase (ACC) complex. Biotin carboxylase (BC) catalyzes the carboxylation of biotin on its carrier protein (BCCP) and then the CO(2) group is transferred by the transcarboxylase to acetyl-CoA to form malonyl-CoA. This is Acetyl-coenzyme A carboxylase carboxyl transferase subunit beta from Methylorubrum extorquens (strain ATCC 14718 / DSM 1338 / JCM 2805 / NCIMB 9133 / AM1) (Methylobacterium extorquens).